The following is a 267-amino-acid chain: Cilia- and flagella-associated protein 300 (267 aa).

The protein belongs to the CFAP300 family. As to quaternary structure, interacts with DNAAF2.

The protein localises to the cytoplasm. It localises to the cytoskeleton. Its subcellular location is the cilium axoneme. In terms of biological role, cilium- and flagellum-specific protein that plays a role in axonemal structure organization and motility. May play a role in outer and inner dynein arm assembly. This is Cilia- and flagella-associated protein 300 from Bos taurus (Bovine).